Consider the following 418-residue polypeptide: Putative O-antigen transporter (418 aa).

11 consecutive transmembrane segments (helical) span residues 8–28 (VWNL…LGFL), 37–57 (FGVY…DVGL), 85–105 (FLVL…DGIV), 124–144 (LLAI…ILEG), 165–185 (IPAI…GLIF), 217–237 (LFFF…MVYF), 251–271 (VAFY…PAAI), 297–317 (LLMF…SGLV), 334–354 (LNVL…FSAI), 362–382 (ITAL…YFMV), and 385–405 (YGLL…ALLL).

The protein belongs to the polysaccharide synthase family.

It localises to the cell inner membrane. It participates in bacterial outer membrane biogenesis; lipopolysaccharide biosynthesis. Could be an O-antigen transporter. The sequence is that of Putative O-antigen transporter (rfbE) from Shigella flexneri.